The following is a 149-amino-acid chain: Calmodulin-2 (149 aa).

4 EF-hand domains span residues 8–43 (DQIS…LGQN), 44–79 (PTEA…KMKD), 81–116 (DSEE…LGEK), and 117–149 (LTDE…MMAK). Residues Asp-21, Asp-23, Asp-25, Cys-27, Glu-32, Asp-57, Asp-59, Asn-61, Thr-63, Glu-68, Asp-94, Asp-96, Asn-98, Glu-105, Asp-130, Asp-132, Asp-134, Gln-136, and Glu-141 each contribute to the Ca(2+) site.

This sequence belongs to the calmodulin family. In terms of assembly, interacts with KCBP and CIP111. Binds to IQD1 and IQD20.

Its subcellular location is the cytoplasm. The protein resides in the cytoskeleton. Calmodulin mediates the control of a large number of enzymes, ion channels and other proteins by Ca(2+). Among the enzymes to be stimulated by the calmodulin-Ca(2+) complex are a number of protein kinases and phosphatases. The sequence is that of Calmodulin-2 (CAM2) from Arabidopsis thaliana (Mouse-ear cress).